Consider the following 248-residue polypeptide: Uridylate kinase (248 aa).

11–14 (KISG) is a binding site for ATP. Gly53 provides a ligand contact to UMP. Positions 54 and 58 each coordinate ATP. UMP contacts are provided by residues Asp74 and 135-142 (AGSPYLTT). ATP-binding residues include Thr162, Tyr169, and Asp172.

The protein belongs to the UMP kinase family. In terms of assembly, homohexamer.

It is found in the cytoplasm. The enzyme catalyses UMP + ATP = UDP + ADP. It functions in the pathway pyrimidine metabolism; CTP biosynthesis via de novo pathway; UDP from UMP (UMPK route): step 1/1. With respect to regulation, inhibited by UTP. Functionally, catalyzes the reversible phosphorylation of UMP to UDP. In Chlamydia pneumoniae (Chlamydophila pneumoniae), this protein is Uridylate kinase.